Reading from the N-terminus, the 343-residue chain is Heat-inducible transcription repressor HrcA (343 aa).

The protein belongs to the HrcA family.

Its function is as follows. Negative regulator of class I heat shock genes (grpE-dnaK-dnaJ and groELS operons). Prevents heat-shock induction of these operons. This chain is Heat-inducible transcription repressor HrcA, found in Mycoplasma genitalium (strain ATCC 33530 / DSM 19775 / NCTC 10195 / G37) (Mycoplasmoides genitalium).